A 704-amino-acid polypeptide reads, in one-letter code: Protein kinase C-like 1 (704 aa).

Phosphothreonine; by autocatalysis is present on residues Thr89 and Thr139. 2 consecutive Phorbol-ester/DAG-type zinc fingers follow at residues Gly165–Cys215 and Pro237–Cys287. A Phosphothreonine; by autocatalysis modification is found at Thr324. The 260-residue stretch at Phe375 to Phe634 folds into the Protein kinase domain. Residues Leu381–Val389 and Lys404 contribute to the ATP site. Asp499 (proton acceptor) is an active-site residue. Residues Arg635–Lys704 form the AGC-kinase C-terminal domain.

Belongs to the protein kinase superfamily. AGC Ser/Thr protein kinase family. PKC subfamily.

It carries out the reaction L-seryl-[protein] + ATP = O-phospho-L-seryl-[protein] + ADP + H(+). The catalysed reaction is L-threonyl-[protein] + ATP = O-phospho-L-threonyl-[protein] + ADP + H(+). In terms of biological role, diacylglycerol (DAG)-dependent serine/threonine-protein kinase that phosphorylates a range of cellular proteins. Phosphorylates mlk-1, a component of the JNK pathway. Involved in axon regeneration after injury probably by activating the JNK pathway. Plays a role in resistance to fungal infection and in wound healing by promoting expression of antimicrobial peptide nlp-29 in the epidermis downstream of gpa-12 and plc-3 and upstream of tir-1-p38-like pathway. Probably by regulating neuronal transmission in ALA neurons, regulates the decrease in pharyngeal pumping during the quiescent state that precedes each larval molt, downstream of lin-3 and receptor let-23 and phospholipase plc-3. This chain is Protein kinase C-like 1 (tpa-1), found in Caenorhabditis elegans.